We begin with the raw amino-acid sequence, 183 residues long: ATP synthase subunit delta (183 aa).

Belongs to the ATPase delta chain family. As to quaternary structure, F-type ATPases have 2 components, F(1) - the catalytic core - and F(0) - the membrane proton channel. F(1) has five subunits: alpha(3), beta(3), gamma(1), delta(1), epsilon(1). F(0) has three main subunits: a(1), b(2) and c(10-14). The alpha and beta chains form an alternating ring which encloses part of the gamma chain. F(1) is attached to F(0) by a central stalk formed by the gamma and epsilon chains, while a peripheral stalk is formed by the delta and b chains.

The protein localises to the cell inner membrane. F(1)F(0) ATP synthase produces ATP from ADP in the presence of a proton or sodium gradient. F-type ATPases consist of two structural domains, F(1) containing the extramembraneous catalytic core and F(0) containing the membrane proton channel, linked together by a central stalk and a peripheral stalk. During catalysis, ATP synthesis in the catalytic domain of F(1) is coupled via a rotary mechanism of the central stalk subunits to proton translocation. Its function is as follows. This protein is part of the stalk that links CF(0) to CF(1). It either transmits conformational changes from CF(0) to CF(1) or is implicated in proton conduction. In Thermotoga neapolitana (strain ATCC 49049 / DSM 4359 / NBRC 107923 / NS-E), this protein is ATP synthase subunit delta.